Consider the following 435-residue polypeptide: D-amino acid dehydrogenase (435 aa).

3–17 (VIVLGGGVLGVSTAW) contacts FAD.

The protein belongs to the DadA oxidoreductase family. FAD is required as a cofactor.

The catalysed reaction is a D-alpha-amino acid + A + H2O = a 2-oxocarboxylate + AH2 + NH4(+). It functions in the pathway amino-acid degradation; D-alanine degradation; NH(3) and pyruvate from D-alanine: step 1/1. Its function is as follows. Oxidative deamination of D-amino acids. This is D-amino acid dehydrogenase from Chromobacterium violaceum (strain ATCC 12472 / DSM 30191 / JCM 1249 / CCUG 213 / NBRC 12614 / NCIMB 9131 / NCTC 9757 / MK).